The sequence spans 67 residues: uncharacterized protein (67 aa).

A helical membrane pass occupies residues Trp-4–Phe-24.

It is found in the membrane. This is an uncharacterized protein from Bacillus anthracis.